A 283-amino-acid chain; its full sequence is Polyprenyl-phosphate transporter (283 aa).

9 helical membrane passes run 27-47, 51-71, 85-105, 112-132, 148-168, 169-189, 197-217, 230-250, and 255-275; these read GTIA…SGIF, FWPS…AMGS, IPTM…LLKI, FTTK…VITL, TSLI…MLLP, GISG…MLAI, FAGL…FIIS, LMTF…VFPG, and IVMW…SLTL.

Belongs to the PopT family.

Its subcellular location is the cell membrane. Its activity is regulated as follows. Active in alkaline conditions. Flippase that catalyzes the transport of undecaprenyl phosphate (UndP) across the cytoplasmic membrane, from the external side to the cytoplasmic side. Is involved in UndP recycling during peptidoglycan synthesis. Necessary for peptidoglycan maintenance. The polypeptide is Polyprenyl-phosphate transporter (Staphylococcus aureus (strain NCTC 8325 / PS 47)).